We begin with the raw amino-acid sequence, 280 residues long: MATYLIGDVHGCYDELIALLHKVEFTPGKDTLWLTGDLVARGPGSLDVLRYVKSLGDSVRLVLGNHDLHLLAVFAGISRNKPKDRLTPLLEAPDADELLNWLRRQPLLQIDEEKKLVMAHAGITPQWDLQTAKECARDVEAVLSSDSYPFFLDAMYGDMPNNWSPELRGLGRLRFITNAFTRMRFCFPNGQLDMYSKESPEEAPAPLKPWFAIPGPVAEEYSIAFGHWASLEGKGTPEGIYALDTGCCWGGTLTCLRWEDKQYFVQPSNRHKDLGEAAAS.

Belongs to the Ap4A hydrolase family.

It catalyses the reaction P(1),P(4)-bis(5'-adenosyl) tetraphosphate + H2O = 2 ADP + 2 H(+). In terms of biological role, hydrolyzes diadenosine 5',5'''-P1,P4-tetraphosphate to yield ADP. The polypeptide is Bis(5'-nucleosyl)-tetraphosphatase, symmetrical (Shigella boydii serotype 18 (strain CDC 3083-94 / BS512)).